Reading from the N-terminus, the 161-residue chain is Lipid droplet assembly factor 1 (161 aa).

Residues 1-43 (MAKEEPQSISRDLQELQKKLSLLIDSFQNNSKVVAFMKSPVGQ) lie on the Cytoplasmic side of the membrane. A helical transmembrane segment spans residues 44 to 61 (YLDSHPFLAFTLLVFIVM). Residues 62–67 (SAVPVG) are Lumenal-facing. The helical transmembrane segment at 68–87 (FFLLIVVLTTLAALLGVIIL) threads the bilayer. Residues 88-93 (EGLVIS) lie on the Cytoplasmic side of the membrane. Residues 94–110 (VGGFSLLCILCGLGFVS) form a helical membrane-spanning segment. At 111-116 (LAMSGM) the chain is on the lumenal side. The chain crosses the membrane as a helical span at residues 117 to 133 (MIASYVVVSSLISCWFS). Residues 134–161 (PRPLTQQNTSCDFLPAMKSAEFEGLYQE) lie on the Cytoplasmic side of the membrane.

This sequence belongs to the LDAF1 family. Interacts with isoform 1 and isoform 3 of BSCL2/seipin to form an oligomeric complex. Expressed at high levels in the heart and skeletal muscle. Expressed at low levels in kidney, small intestine, lung and liver.

The protein localises to the endoplasmic reticulum membrane. Its subcellular location is the lipid droplet. Functionally, plays an important role in the formation of lipid droplets (LD) which are storage organelles at the center of lipid and energy homeostasis. In association with BSCL2/seipin, defines the sites of LD formation in the endoplasmic reticulum. This chain is Lipid droplet assembly factor 1, found in Homo sapiens (Human).